The sequence spans 388 residues: Probable peptidoglycan glycosyltransferase FtsW (388 aa).

Helical transmembrane passes span 16-36 (LVLI…SSSV), 54-74 (VFAL…PSQS), 82-102 (WFLL…EIGG), 109-129 (LVVM…LFLA), 144-164 (TAVI…LLQP), 167-187 (GTTV…GAPF), 189-209 (YFVI…INSP), 233-253 (SQAL…GASV), 277-297 (WLGV…MFAV), 310-330 (ALVV…NVGV), and 342-362 (LPFV…IGLV).

Belongs to the SEDS family. FtsW subfamily.

It is found in the cell inner membrane. The enzyme catalyses [GlcNAc-(1-&gt;4)-Mur2Ac(oyl-L-Ala-gamma-D-Glu-L-Lys-D-Ala-D-Ala)](n)-di-trans,octa-cis-undecaprenyl diphosphate + beta-D-GlcNAc-(1-&gt;4)-Mur2Ac(oyl-L-Ala-gamma-D-Glu-L-Lys-D-Ala-D-Ala)-di-trans,octa-cis-undecaprenyl diphosphate = [GlcNAc-(1-&gt;4)-Mur2Ac(oyl-L-Ala-gamma-D-Glu-L-Lys-D-Ala-D-Ala)](n+1)-di-trans,octa-cis-undecaprenyl diphosphate + di-trans,octa-cis-undecaprenyl diphosphate + H(+). Its pathway is cell wall biogenesis; peptidoglycan biosynthesis. Its function is as follows. Peptidoglycan polymerase that is essential for cell division. The sequence is that of Probable peptidoglycan glycosyltransferase FtsW from Thiomicrospira cyclica (strain DSM 14477 / JCM 11371 / ALM1) (Thioalkalimicrobium cyclicum).